A 396-amino-acid polypeptide reads, in one-letter code: Phosphoglycerate kinase (396 aa).

Residues 21–23 (DLN), arginine 36, 59–62 (HFGR), arginine 118, and arginine 151 each bind substrate. Residues lysine 201, glutamate 323, and 353 to 356 (GGDT) contribute to the ATP site.

The protein belongs to the phosphoglycerate kinase family. Monomer.

The protein resides in the cytoplasm. The catalysed reaction is (2R)-3-phosphoglycerate + ATP = (2R)-3-phospho-glyceroyl phosphate + ADP. Its pathway is carbohydrate degradation; glycolysis; pyruvate from D-glyceraldehyde 3-phosphate: step 2/5. This Brucella abortus biovar 1 (strain 9-941) protein is Phosphoglycerate kinase.